Here is a 140-residue protein sequence, read N- to C-terminus: MSSRHRGRSLALMCLYQIDLVGTDPDRAMKFDWYDKKITREEKDYAVFLVKGVVENRKAIDTLIKKYSENWELSRISVVNRCILRLSILSLQKEPFLAAPVVINEAVELTKEFETEESAQFINGLLDAFYKKEILPKEPH.

This sequence belongs to the NusB family.

Functionally, involved in transcription antitermination. Required for transcription of ribosomal RNA (rRNA) genes. Binds specifically to the boxA antiterminator sequence of the ribosomal RNA (rrn) operons. In Leptospira biflexa serovar Patoc (strain Patoc 1 / Ames), this protein is Transcription antitermination protein NusB.